A 63-amino-acid chain; its full sequence is Cytochrome c oxidase subunit 7C, mitochondrial (63 aa).

A mitochondrion-targeting transit peptide spans 1-16; that stretch reads MLGHSIRRFTTSVVRR. Residues 17–33 lie on the Mitochondrial matrix side of the membrane; that stretch reads SHYEEGPGKNLPFSVKN. An N6-acetyllysine; alternate modification is found at lysine 25. Lysine 25 is modified (N6-succinyllysine; alternate). The helical transmembrane segment at 34–60 threads the bilayer; sequence KWALLVKMSLYFGSAFATPFLIVRHQL. The Mitochondrial intermembrane segment spans residues 61–63; sequence LKQ.

The protein belongs to the cytochrome c oxidase VIIc family. As to quaternary structure, component of the cytochrome c oxidase (complex IV, CIV), a multisubunit enzyme composed of 14 subunits. The complex is composed of a catalytic core of 3 subunits MT-CO1, MT-CO2 and MT-CO3, encoded in the mitochondrial DNA, and 11 supernumerary subunits COX4I, COX5A, COX5B, COX6A, COX6B, COX6C, COX7A, COX7B, COX7C, COX8 and NDUFA4, which are encoded in the nuclear genome. The complex exists as a monomer or a dimer and forms supercomplexes (SCs) in the inner mitochondrial membrane with NADH-ubiquinone oxidoreductase (complex I, CI) and ubiquinol-cytochrome c oxidoreductase (cytochrome b-c1 complex, complex III, CIII), resulting in different assemblies (supercomplex SCI(1)III(2)IV(1) and megacomplex MCI(2)III(2)IV(2)). Interacts with RAB5IF.

The protein localises to the mitochondrion inner membrane. It functions in the pathway energy metabolism; oxidative phosphorylation. Functionally, component of the cytochrome c oxidase, the last enzyme in the mitochondrial electron transport chain which drives oxidative phosphorylation. The respiratory chain contains 3 multisubunit complexes succinate dehydrogenase (complex II, CII), ubiquinol-cytochrome c oxidoreductase (cytochrome b-c1 complex, complex III, CIII) and cytochrome c oxidase (complex IV, CIV), that cooperate to transfer electrons derived from NADH and succinate to molecular oxygen, creating an electrochemical gradient over the inner membrane that drives transmembrane transport and the ATP synthase. Cytochrome c oxidase is the component of the respiratory chain that catalyzes the reduction of oxygen to water. Electrons originating from reduced cytochrome c in the intermembrane space (IMS) are transferred via the dinuclear copper A center (CU(A)) of subunit 2 and heme A of subunit 1 to the active site in subunit 1, a binuclear center (BNC) formed by heme A3 and copper B (CU(B)). The BNC reduces molecular oxygen to 2 water molecules using 4 electrons from cytochrome c in the IMS and 4 protons from the mitochondrial matrix. This is Cytochrome c oxidase subunit 7C, mitochondrial (COX7C) from Papio hamadryas (Hamadryas baboon).